A 217-amino-acid chain; its full sequence is Large ribosomal subunit protein uL3 (217 aa).

This sequence belongs to the universal ribosomal protein uL3 family. Part of the 50S ribosomal subunit. Forms a cluster with proteins L14 and L19.

Functionally, one of the primary rRNA binding proteins, it binds directly near the 3'-end of the 23S rRNA, where it nucleates assembly of the 50S subunit. The protein is Large ribosomal subunit protein uL3 of Mycobacterium bovis (strain ATCC BAA-935 / AF2122/97).